Reading from the N-terminus, the 224-residue chain is Ribonuclease 3 (224 aa).

An RNase III domain is found at 5 to 127 (ANRLQRRLGY…IIGAIYLDSD (123 aa)). Glutamate 40 serves as a coordination point for Mg(2+). Residue aspartate 44 is part of the active site. Residues aspartate 113 and glutamate 116 each contribute to the Mg(2+) site. The active site involves glutamate 116. A DRBM domain is found at 154–224 (DPKTRLQECL…AELALKQLES (71 aa)).

This sequence belongs to the ribonuclease III family. Homodimer. Mg(2+) is required as a cofactor.

It localises to the cytoplasm. The catalysed reaction is Endonucleolytic cleavage to 5'-phosphomonoester.. Functionally, digests double-stranded RNA. Involved in the processing of primary rRNA transcript to yield the immediate precursors to the large and small rRNAs (23S and 16S). Processes some mRNAs, and tRNAs when they are encoded in the rRNA operon. Processes pre-crRNA and tracrRNA of type II CRISPR loci if present in the organism. This is Ribonuclease 3 from Photobacterium profundum (strain SS9).